Consider the following 1907-residue polypeptide: Receptor-type tyrosine-protein phosphatase S (1907 aa).

Residues 1-29 (MAPTWSPSVVSVVGPVGLFLVLLARGCLA) form the signal peptide. At 30-1257 (EEPPRFIREP…PQPIVDGEEG (1228 aa)) the chain is on the extracellular side. Ig-like C2-type domains are found at residues 33 to 123 (PRFI…AKLT), 135 to 224 (PNID…ANLY), and 232 to 314 (PRFS…AQIT). 2 cysteine pairs are disulfide-bonded: Cys-54-Cys-107 and Cys-156-Cys-207. Residues 68 to 72 (KKGKK) are important for binding to glycosaminoglycan chains. N-linked (GlcNAc...) asparagine glycosylation is found at Asn-250 and Asn-295. An intrachain disulfide couples Cys-253 to Cys-298. Fibronectin type-III domains lie at 321–411 (APGT…TGEQ), 416–510 (APRN…TQQG), 514–603 (QPMN…TLQA), 608–705 (PPQD…TDED), 710–809 (PPRK…TKGA), 810–906 (VLGR…APRG), 907–1008 (FPQI…LARD), and 1011–1095 (SPKN…TAFN). Over residues 691–700 (PGPESSPVVV) the composition is skewed to low complexity. The tract at residues 691–711 (PGPESSPVVVRTDEDVPSAPP) is disordered. The N-linked (GlcNAc...) asparagine glycan is linked to Asn-720. Asn-916 carries N-linked (GlcNAc...) asparagine glycosylation. A helical transmembrane segment spans residues 1258-1278 (LIWVIGPVLAVVFIICIVIAI). Topologically, residues 1279–1907 (LLYKNKPDSK…YLGSFDHYAT (629 aa)) are cytoplasmic. A compositionally biased stretch (basic and acidic residues) spans 1286 to 1296 (DSKRKDSEPRT). The interval 1286–1313 (DSKRKDSEPRTKCLLNNADLAPHHPKDP) is disordered. Tyrosine-protein phosphatase domains lie at 1352–1607 (LSQE…LLEA) and 1639–1898 (MELE…ALEY). Substrate-binding positions include Asp-1516, 1548–1554 (CSAGVGR), and Gln-1592. Cys-1548 (phosphocysteine intermediate) is an active-site residue. The Phosphocysteine intermediate role is filled by Cys-1839.

The protein belongs to the protein-tyrosine phosphatase family. Receptor class 2A subfamily. Binding to large heparan sulfate proteoglycan structures promotes oligomerization. Binding to chondroitin sulfate proteoglycan does not lead to oligomerization. Interacts (via Ig-like domains) with NTRK3. Interacts (via Ig-like domains) with NTRK1, but does not form detectable complexes with NTRK2. Interacts with PPFIA1, PPFIA2 and PPFIA3. Post-translationally, a cleavage occurs, separating the extracellular domain from the transmembrane segment. This process called 'ectodomain shedding' is thought to be involved in receptor desensitization, signal transduction and/or membrane localization. Detected in brain cortex, cerebellum and thoracic spinal cord (at protein level). Detected in motor cortex and white matter of the spinal cord, but not in spinal cord gray matter. Isoform 1 and isoform 6 are predominantly expressed in the brain (cerebrum and cerebellum) and to a lesser extent in the heart and skeletal muscle. Also found in neuronal-derived cell lines. Detected in the ganglion cell layer of the retina and in glial cells along the optic nerve. Detected in bone marrow and spleen plasmacytoid dendritic cells.

The protein localises to the cell membrane. Its subcellular location is the cell projection. The protein resides in the axon. It localises to the perikaryon. It is found in the cytoplasmic vesicle. The protein localises to the secretory vesicle. Its subcellular location is the synaptic vesicle membrane. The protein resides in the synapse. It localises to the synaptosome. It is found in the postsynaptic density. The protein localises to the neuron projection. Its subcellular location is the growth cone. The enzyme catalyses O-phospho-L-tyrosyl-[protein] + H2O = L-tyrosyl-[protein] + phosphate. In terms of biological role, cell surface receptor that binds to glycosaminoglycans, including chondroitin sulfate proteoglycans and heparan sulfate proteoglycans. Binding to chondroitin sulfate and heparan sulfate proteoglycans has opposite effects on PTPRS oligomerization and regulation of neurite outgrowth. Contributes to the inhibition of neurite and axonal outgrowth by chondroitin sulfate proteoglycans, also after nerve transection. Plays a role in stimulating neurite outgrowth in response to the heparan sulfate proteoglycan GPC2. Required for normal brain development, especially for normal development of the pituitary gland and the olfactory bulb. Functions as a tyrosine phosphatase. Mediates dephosphorylation of NTRK1, NTRK2 and NTRK3. Plays a role in down-regulation of signaling cascades that lead to the activation of Akt and MAP kinases. Down-regulates TLR9-mediated activation of NF-kappa-B, as well as production of TNF, interferon alpha and interferon beta. The chain is Receptor-type tyrosine-protein phosphatase S (Ptprs) from Mus musculus (Mouse).